A 364-amino-acid chain; its full sequence is UDP-N-acetylglucosamine--N-acetylmuramyl-(pentapeptide) pyrophosphoryl-undecaprenol N-acetylglucosamine transferase 1 (364 aa).

UDP-N-acetyl-alpha-D-glucosamine is bound by residues 10–12, Asn124, Ser195, Ile250, and Gln295; that span reads TGG.

Belongs to the glycosyltransferase 28 family. MurG subfamily.

It localises to the cell membrane. The catalysed reaction is di-trans,octa-cis-undecaprenyl diphospho-N-acetyl-alpha-D-muramoyl-L-alanyl-D-glutamyl-meso-2,6-diaminopimeloyl-D-alanyl-D-alanine + UDP-N-acetyl-alpha-D-glucosamine = di-trans,octa-cis-undecaprenyl diphospho-[N-acetyl-alpha-D-glucosaminyl-(1-&gt;4)]-N-acetyl-alpha-D-muramoyl-L-alanyl-D-glutamyl-meso-2,6-diaminopimeloyl-D-alanyl-D-alanine + UDP + H(+). It functions in the pathway cell wall biogenesis; peptidoglycan biosynthesis. Its function is as follows. Cell wall formation. Catalyzes the transfer of a GlcNAc subunit on undecaprenyl-pyrophosphoryl-MurNAc-pentapeptide (lipid intermediate I) to form undecaprenyl-pyrophosphoryl-MurNAc-(pentapeptide)GlcNAc (lipid intermediate II). This chain is UDP-N-acetylglucosamine--N-acetylmuramyl-(pentapeptide) pyrophosphoryl-undecaprenol N-acetylglucosamine transferase 1, found in Bacillus thuringiensis subsp. konkukian (strain 97-27).